Here is a 464-residue protein sequence, read N- to C-terminus: Alpha-amylase (464 aa).

The signal sequence occupies residues 1–21; it reads MKNTAGILAIAGMLIAPLAHA. H107 and R213 together coordinate substrate. The active-site Nucleophile is the D215. A substrate-binding site is contributed by 218–219; that stretch reads KH. Catalysis depends on E242, which acts as the Proton donor. Substrate contacts are provided by G247 and H313.

This sequence belongs to the glycosyl hydrolase 13 family.

It localises to the secreted. The catalysed reaction is Endohydrolysis of (1-&gt;4)-alpha-D-glucosidic linkages in polysaccharides containing three or more (1-&gt;4)-alpha-linked D-glucose units.. This is Alpha-amylase from Aeromonas hydrophila.